The following is a 329-amino-acid chain: Elongation factor Ts (329 aa).

An involved in Mg(2+) ion dislocation from EF-Tu region spans residues 79 to 82 (TDFV).

This sequence belongs to the EF-Ts family.

Its subcellular location is the cytoplasm. Its function is as follows. Associates with the EF-Tu.GDP complex and induces the exchange of GDP to GTP. It remains bound to the aminoacyl-tRNA.EF-Tu.GTP complex up to the GTP hydrolysis stage on the ribosome. The sequence is that of Elongation factor Ts from Phocaeicola vulgatus (strain ATCC 8482 / DSM 1447 / JCM 5826 / CCUG 4940 / NBRC 14291 / NCTC 11154) (Bacteroides vulgatus).